Here is a 441-residue protein sequence, read N- to C-terminus: Protein dcd1A (441 aa).

A signal peptide spans 1 to 23 (MKIFNKLIFLIIQCILIISVTNA). N-linked (GlcNAc...) asparagine glycosylation is found at asparagine 45, asparagine 261, asparagine 308, and asparagine 419.

It localises to the secreted. In Dictyostelium discoideum (Social amoeba), this protein is Protein dcd1A (dcd1A).